A 75-amino-acid polypeptide reads, in one-letter code: Penaeidin-3k (75 aa).

The N-terminal stretch at 1 to 19 is a signal peptide; the sequence is MRLVVCLVFLASFALVCQG. Glutamine 20 is modified (pyrrolidone carboxylic acid). Disulfide bonds link cysteine 44–cysteine 59, cysteine 48–cysteine 66, and cysteine 60–cysteine 67. The residue at position 74 (serine 74) is a Serine amide.

It belongs to the penaeidin family.

Its subcellular location is the cytoplasmic granule. Antibacterial and antifungal activity. Presents chitin-binding activity. The chain is Penaeidin-3k from Penaeus setiferus (Atlantic white shrimp).